The following is an 880-amino-acid chain: MOG interacting and ectopic P-granules protein 1 (880 aa).

Residues 1–20 (MVTSDETVLATTTNKTSITT) show a composition bias toward polar residues. Disordered regions lie at residues 1–37 (MVTS…SETD), 82–257 (DKVE…DDNE), and 350–370 (ERPK…QHNP). The span at 23–37 (MEPKSSDESTDSETD) shows a compositional bias: basic and acidic residues. Residues 87–105 (ATNSVVDLSSNGSSATTSV) are compositionally biased toward polar residues. The span at 108–120 (EEQEEKANEDETN) shows a compositional bias: acidic residues. 2 stretches are compositionally biased toward basic and acidic residues: residues 154–170 (SKSD…IKDS) and 183–193 (KPEEKEEKNDT). Acidic residues predominate over residues 215-224 (QLDDDDDDIQ). Composition is skewed to basic and acidic residues over residues 235-252 (QKTE…KAEP) and 350-364 (ERPK…ERQQ). 2 C2H2-type zinc fingers span residues 436–459 (SRCG…ETLH) and 465–488 (FQCT…FEAH). The CCHC-type zinc finger occupies 501–523 (YPCAICEEDFNFKGVREQHYKQC). 4 consecutive C2H2-type zinc fingers follow at residues 728 to 751 (FQCE…QVLH), 768 to 791 (LACS…VMSH), 809 to 830 (GRCK…VADH), and 841 to 864 (YSCD…SSTH).

In terms of assembly, interacts with hda-1, let-418, lin-1, mog-1, mog-4, mog-5, mog-6, pie-1 and unc-98.

It localises to the nucleus. Has a broad role in development, specifically in the genetic pathway SynMuvB that negatively regulates specification of the vulval cell fate. Required for fem-3 3'-UTR-mediated repression in the regulation of the sperm/oocyte switch. Acts by regulating the translation of fem-3 mRNA, by binding to its 3'-UTR. In Caenorhabditis briggsae, this protein is MOG interacting and ectopic P-granules protein 1.